A 716-amino-acid polypeptide reads, in one-letter code: Probable glutamate--tRNA ligase, cytoplasmic (716 aa).

A Phosphoserine modification is found at serine 190. 210–212 (RFP) contacts L-glutamate. The 'HIGH' region motif lies at 215-224 (PSGYLHIGHA). An ATP-binding site is contributed by histidine 220. L-glutamate-binding positions include aspartate 246, 386–390 (YDFAC), and arginine 404. ATP-binding positions include glutamate 407 and 441–445 (LLSKR). The short motif at 441 to 445 (LLSKR) is the 'KMSKS' region element.

It belongs to the class-I aminoacyl-tRNA synthetase family. Glutamate--tRNA ligase type 2 subfamily. As to quaternary structure, component of a yeast aminoacyl-tRNA synthase (aaRS) complex formed by methionyl-tRNA synthase, glutamyl-tRNA synthase and the tRNA aminoacylation cofactor arc1 in a stoichiometric complex. Interacts with arc1/SPAC30C2.04.

The protein resides in the cytoplasm. It localises to the nucleus. It catalyses the reaction tRNA(Glu) + L-glutamate + ATP = L-glutamyl-tRNA(Glu) + AMP + diphosphate. Its function is as follows. Catalyzes the attachment of glutamate to tRNA(Glu) in a two-step reaction: glutamate is first activated by ATP to form Glu-AMP and then transferred to the acceptor end of tRNA(Glu). The sequence is that of Probable glutamate--tRNA ligase, cytoplasmic (gus1) from Schizosaccharomyces pombe (strain 972 / ATCC 24843) (Fission yeast).